A 438-amino-acid chain; its full sequence is Phosphoribosylamine--glycine ligase (438 aa).

The 209-residue stretch at Arg108–Lys316 folds into the ATP-grasp domain. Ile135 to Thr194 is an ATP binding site. Gln274, Glu286, and Asn288 together coordinate Mg(2+). Gln274, Glu286, and Asn288 together coordinate Mn(2+).

It belongs to the GARS family. The cofactor is Mg(2+). Mn(2+) is required as a cofactor.

The enzyme catalyses 5-phospho-beta-D-ribosylamine + glycine + ATP = N(1)-(5-phospho-beta-D-ribosyl)glycinamide + ADP + phosphate + H(+). Its pathway is purine metabolism; IMP biosynthesis via de novo pathway; N(1)-(5-phospho-D-ribosyl)glycinamide from 5-phospho-alpha-D-ribose 1-diphosphate: step 2/2. This is Phosphoribosylamine--glycine ligase from Pyrococcus abyssi (strain GE5 / Orsay).